We begin with the raw amino-acid sequence, 162 residues long: NADH-quinone oxidoreductase subunit C (162 aa).

This sequence belongs to the complex I 30 kDa subunit family. As to quaternary structure, NDH-1 is composed of 14 different subunits. Subunits NuoB, C, D, E, F, and G constitute the peripheral sector of the complex.

The protein resides in the cell inner membrane. The catalysed reaction is a quinone + NADH + 5 H(+)(in) = a quinol + NAD(+) + 4 H(+)(out). NDH-1 shuttles electrons from NADH, via FMN and iron-sulfur (Fe-S) centers, to quinones in the respiratory chain. The immediate electron acceptor for the enzyme in this species is believed to be ubiquinone. Couples the redox reaction to proton translocation (for every two electrons transferred, four hydrogen ions are translocated across the cytoplasmic membrane), and thus conserves the redox energy in a proton gradient. The chain is NADH-quinone oxidoreductase subunit C from Geobacter metallireducens (strain ATCC 53774 / DSM 7210 / GS-15).